Here is a 335-residue protein sequence, read N- to C-terminus: Glycerol-3-phosphate dehydrogenase [NAD(P)+] (335 aa).

NADPH-binding residues include Trp-14, Arg-33, and Lys-111. Lys-111, Gly-140, and Ser-142 together coordinate sn-glycerol 3-phosphate. Ala-144 is an NADPH binding site. Sn-glycerol 3-phosphate contacts are provided by Lys-195, Asp-248, Ser-258, Arg-259, and Asn-260. Lys-195 (proton acceptor) is an active-site residue. An NADPH-binding site is contributed by Arg-259. Residues Val-283 and Glu-285 each contribute to the NADPH site.

The protein belongs to the NAD-dependent glycerol-3-phosphate dehydrogenase family.

It is found in the cytoplasm. The catalysed reaction is sn-glycerol 3-phosphate + NAD(+) = dihydroxyacetone phosphate + NADH + H(+). It catalyses the reaction sn-glycerol 3-phosphate + NADP(+) = dihydroxyacetone phosphate + NADPH + H(+). It functions in the pathway membrane lipid metabolism; glycerophospholipid metabolism. Catalyzes the reduction of the glycolytic intermediate dihydroxyacetone phosphate (DHAP) to sn-glycerol 3-phosphate (G3P), the key precursor for phospholipid synthesis. The polypeptide is Glycerol-3-phosphate dehydrogenase [NAD(P)+] (Burkholderia mallei (strain NCTC 10247)).